A 103-amino-acid chain; its full sequence is Thrombin inhibitor rhodniin (103 aa).

2 Kazal-like domains span residues 1-50 (EGGE…PCEP) and 51-103 (DEDE…PCRT). Cystine bridges form between cysteine 6/cysteine 31, cysteine 8/cysteine 27, cysteine 16/cysteine 48, cysteine 57/cysteine 84, cysteine 60/cysteine 80, and cysteine 69/cysteine 101.

It is found in the secreted. Thrombin-specific inhibitor. Appears to form 1:1 complexes with thrombin. Prevents blood clotting to allow the insect to feed on blood. The sequence is that of Thrombin inhibitor rhodniin from Rhodnius prolixus (Triatomid bug).